The chain runs to 350 residues: Ribosomal RNA large subunit methyltransferase M (350 aa).

Residues 217–220 (APGG), Asp-236, Asp-256, and Asp-272 each bind S-adenosyl-L-methionine. The active-site Proton acceptor is Lys-301.

Belongs to the class I-like SAM-binding methyltransferase superfamily. RNA methyltransferase RlmE family. RlmM subfamily. Monomer.

It is found in the cytoplasm. It carries out the reaction cytidine(2498) in 23S rRNA + S-adenosyl-L-methionine = 2'-O-methylcytidine(2498) in 23S rRNA + S-adenosyl-L-homocysteine + H(+). Functionally, catalyzes the 2'-O-methylation at nucleotide C2498 in 23S rRNA. This is Ribosomal RNA large subunit methyltransferase M from Cellvibrio japonicus (strain Ueda107) (Pseudomonas fluorescens subsp. cellulosa).